A 480-amino-acid polypeptide reads, in one-letter code: Krueppel-like factor 10 (480 aa).

Residues 1–12 are compositionally biased toward polar residues; sequence MLNFGASLQQAS. 3 disordered regions span residues 1 to 32, 64 to 83, and 97 to 146; these read MLNF…PWDK, VTPV…TPDL, and PSDF…APPL. Residues 14-32 show a composition bias toward basic and acidic residues; that stretch reads GKMELISEKSKEGAHPWDK. Ser-183 is modified (phosphoserine). The interval 202–222 is disordered; the sequence is AAVSPNRPKPEPSTAANGAEK. Position 249 is a phosphoserine (Ser-249). 3 C2H2-type zinc fingers span residues 369 to 393, 399 to 423, and 429 to 451; these read HICS…VRTH, FSCS…RRTH, and FACP…ARRH.

It belongs to the Sp1 C2H2-type zinc-finger protein family. Post-translationally, ubiquitinated; mediated by SIAH1 and leading to its subsequent proteasomal degradation.

It is found in the nucleus. Transcriptional repressor which binds to the consensus sequence 5'-GGTGTG-3'. Regulates the circadian expression of genes involved in lipogenesis, gluconeogenesis, and glycolysis in the liver. Represses the expression of PCK2, a rate-limiting step enzyme of gluconeogenesis. May play a role in the cell cycle regulation. Plays a role in the regulation of the circadian clock; binds to the GC box sequence in the promoter of the core clock component ARTNL/BMAL1 and represses its transcriptional activity. The polypeptide is Krueppel-like factor 10 (Klf10) (Rattus norvegicus (Rat)).